We begin with the raw amino-acid sequence, 391 residues long: tRNA(Met) cytidine acetate ligase (391 aa).

ATP-binding positions include 7-20, Gly101, Asn153, and Arg178; that span reads IAEY…HIYQ.

The protein belongs to the TmcAL family.

The protein resides in the cytoplasm. It carries out the reaction cytidine(34) in elongator tRNA(Met) + acetate + ATP = N(4)-acetylcytidine(34) in elongator tRNA(Met) + AMP + diphosphate. Catalyzes the formation of N(4)-acetylcytidine (ac(4)C) at the wobble position of elongator tRNA(Met), using acetate and ATP as substrates. First activates an acetate ion to form acetyladenylate (Ac-AMP) and then transfers the acetyl group to tRNA to form ac(4)C34. This is tRNA(Met) cytidine acetate ligase from Latilactobacillus sakei subsp. sakei (strain 23K) (Lactobacillus sakei subsp. sakei).